We begin with the raw amino-acid sequence, 953 residues long: Translation initiation factor IF-2 (953 aa).

2 disordered regions span residues 48 to 248 (SSFS…AELA) and 279 to 363 (TKLK…TERK). Basic and acidic residues-rich tracts occupy residues 80–89 (TGSEHAEKTQ), 98–111 (FKAE…EQAA), and 140–188 (QGDK…ENHK). Residues 191-207 (RFTNQKKQGRQEPQSKS) show a composition bias toward polar residues. Residues 229 to 248 (RQSETRFRAQQEAKRLAELA) are compositionally biased toward basic and acidic residues. The span at 282-291 (KSSNISAKST) shows a compositional bias: polar residues. The span at 300–317 (ARPEKNRELTHHSQEGQK) shows a compositional bias: basic and acidic residues. Positions 322–338 (SWNSQNQVRNQKNSNWN) are enriched in low complexity. The span at 339–348 (KNKKTKKGKN) shows a compositional bias: basic residues. A tr-type G domain is found at 454–623 (ERAPVVTIMG…LLVAEVEELK (170 aa)). Positions 463–470 (GHVDHGKT) are G1. 463 to 470 (GHVDHGKT) is a binding site for GTP. The interval 488–492 (GITQH) is G2. Residues 509 to 512 (DTPG) form a G3 region. GTP is bound by residues 509 to 513 (DTPGH) and 563 to 566 (NKID). Residues 563–566 (NKID) form a G4 region. Positions 599-601 (SAK) are G5.

Belongs to the TRAFAC class translation factor GTPase superfamily. Classic translation factor GTPase family. IF-2 subfamily.

Its subcellular location is the cytoplasm. One of the essential components for the initiation of protein synthesis. Protects formylmethionyl-tRNA from spontaneous hydrolysis and promotes its binding to the 30S ribosomal subunits. Also involved in the hydrolysis of GTP during the formation of the 70S ribosomal complex. This chain is Translation initiation factor IF-2, found in Streptococcus pyogenes serotype M18 (strain MGAS8232).